A 239-amino-acid chain; its full sequence is Ribosomal RNA small subunit methyltransferase G (239 aa).

S-adenosyl-L-methionine contacts are provided by residues Gly77, Phe82, 128–129 (AE), and Arg147.

It belongs to the methyltransferase superfamily. RNA methyltransferase RsmG family.

The protein localises to the cytoplasm. Specifically methylates the N7 position of guanine in position 535 of 16S rRNA. The chain is Ribosomal RNA small subunit methyltransferase G from Bacillus cereus (strain ZK / E33L).